Reading from the N-terminus, the 575-residue chain is Sulfite reductase [NADPH] hemoprotein beta-component (575 aa).

Cys440, Cys446, Cys485, and Cys489 together coordinate [4Fe-4S] cluster. Residue Cys489 coordinates siroheme.

The protein belongs to the nitrite and sulfite reductase 4Fe-4S domain family. In terms of assembly, alpha(8)-beta(8). The alpha component is a flavoprotein, the beta component is a hemoprotein. Requires siroheme as cofactor. [4Fe-4S] cluster is required as a cofactor.

It carries out the reaction hydrogen sulfide + 3 NADP(+) + 3 H2O = sulfite + 3 NADPH + 4 H(+). Its pathway is sulfur metabolism; hydrogen sulfide biosynthesis; hydrogen sulfide from sulfite (NADPH route): step 1/1. Component of the sulfite reductase complex that catalyzes the 6-electron reduction of sulfite to sulfide. This is one of several activities required for the biosynthesis of L-cysteine from sulfate. This Chromohalobacter salexigens (strain ATCC BAA-138 / DSM 3043 / CIP 106854 / NCIMB 13768 / 1H11) protein is Sulfite reductase [NADPH] hemoprotein beta-component.